The chain runs to 317 residues: Sulfate adenylyltransferase subunit 2 (317 aa).

Disordered stretches follow at residues 1 to 21 (MPDS…APLD) and 298 to 317 (RAID…EGYF).

This sequence belongs to the PAPS reductase family. CysD subfamily. As to quaternary structure, heterodimer composed of CysD, the smaller subunit, and CysN.

It catalyses the reaction sulfate + ATP + H(+) = adenosine 5'-phosphosulfate + diphosphate. The protein operates within sulfur metabolism; hydrogen sulfide biosynthesis; sulfite from sulfate: step 1/3. With CysN forms the ATP sulfurylase (ATPS) that catalyzes the adenylation of sulfate producing adenosine 5'-phosphosulfate (APS) and diphosphate, the first enzymatic step in sulfur assimilation pathway. APS synthesis involves the formation of a high-energy phosphoric-sulfuric acid anhydride bond driven by GTP hydrolysis by CysN coupled to ATP hydrolysis by CysD. This Rhizobium etli (strain CIAT 652) protein is Sulfate adenylyltransferase subunit 2.